A 1116-amino-acid polypeptide reads, in one-letter code: DNA-directed RNA polymerase subunit beta (1116 aa).

Residues 1070 to 1100 show a composition bias toward basic and acidic residues; the sequence is KIREEEKEREKEREAREMEDPEKIVSKIDAK. Residues 1070 to 1116 form a disordered region; it reads KIREEEKEREKEREAREMEDPEKIVSKIDAKQKKKYKKTKKQTEKKK. Residues 1101–1116 are compositionally biased toward basic residues; it reads QKKKYKKTKKQTEKKK.

The protein belongs to the RNA polymerase beta chain family. As to quaternary structure, in plastids the minimal PEP RNA polymerase catalytic core is composed of four subunits: alpha, beta, beta', and beta''. When a (nuclear-encoded) sigma factor is associated with the core the holoenzyme is formed, which can initiate transcription.

Its subcellular location is the plastid. It localises to the chloroplast. The enzyme catalyses RNA(n) + a ribonucleoside 5'-triphosphate = RNA(n+1) + diphosphate. Functionally, DNA-dependent RNA polymerase catalyzes the transcription of DNA into RNA using the four ribonucleoside triphosphates as substrates. The polypeptide is DNA-directed RNA polymerase subunit beta (Heterosigma akashiwo (Chromophytic alga)).